A 201-amino-acid chain; its full sequence is U1 small nuclear ribonucleoprotein C (201 aa).

The Matrin-type zinc-finger motif lies at 4 to 36 (YYCEYCDIYLTHSSPVGRRQHNQGRKHISAKIE). The segment covering 137–154 (IQKPYNNFDNKNNNYNNK) has biased composition (low complexity). The segment at 137 to 176 (IQKPYNNFDNKNNNYNNKPITNSSYKNDKQDYRNNNENND) is disordered.

Belongs to the U1 small nuclear ribonucleoprotein C family. As to quaternary structure, U1 snRNP is composed of the 7 core Sm proteins B/B', D1, D2, D3, E, F and G that assemble in a heptameric protein ring on the Sm site of the small nuclear RNA to form the core snRNP, and at least 3 U1 snRNP-specific proteins U1-70K, U1-A and U1-C. U1-C interacts with U1 snRNA and the 5' splice-site region of the pre-mRNA.

The protein resides in the nucleus. In terms of biological role, component of the spliceosomal U1 snRNP, which is essential for recognition of the pre-mRNA 5' splice-site and the subsequent assembly of the spliceosome. U1-C is directly involved in initial 5' splice-site recognition for both constitutive and regulated alternative splicing. The interaction with the 5' splice-site seems to precede base-pairing between the pre-mRNA and the U1 snRNA. Stimulates commitment or early (E) complex formation by stabilizing the base pairing of the 5' end of the U1 snRNA and the 5' splice-site region. The sequence is that of U1 small nuclear ribonucleoprotein C from Plasmodium yoelii yoelii.